A 398-amino-acid polypeptide reads, in one-letter code: Chalcone synthase (398 aa).

Cysteine 169 is a catalytic residue.

Belongs to the thiolase-like superfamily. Chalcone/stilbene synthases family.

The enzyme catalyses (E)-4-coumaroyl-CoA + 3 malonyl-CoA + 3 H(+) = 2',4,4',6'-tetrahydroxychalcone + 3 CO2 + 4 CoA. It participates in secondary metabolite biosynthesis; flavonoid biosynthesis. Functionally, the primary product of this enzyme is 4,2',4',6'-tetrahydroxychalcone (also termed naringenin-chalcone or chalcone) which can under specific conditions spontaneously isomerize into naringenin. This chain is Chalcone synthase (CHS), found in Petroselinum crispum (Parsley).